Consider the following 262-residue polypeptide: 14-3-3-like protein A (262 aa).

The disordered stretch occupies residues 240-262 (DNAEEGGDEIKEAASKPEGEGHS). The segment covering 247-262 (DEIKEAASKPEGEGHS) has biased composition (basic and acidic residues).

The protein belongs to the 14-3-3 family.

This chain is 14-3-3-like protein A, found in Hordeum vulgare (Barley).